The chain runs to 288 residues: 4-diphosphocytidyl-2-C-methyl-D-erythritol kinase (288 aa).

Residue Lys8 is part of the active site. Residue 90-100 (PLEAGLAGGSA) participates in ATP binding. Asp132 is a catalytic residue.

It belongs to the GHMP kinase family. IspE subfamily.

It catalyses the reaction 4-CDP-2-C-methyl-D-erythritol + ATP = 4-CDP-2-C-methyl-D-erythritol 2-phosphate + ADP + H(+). It functions in the pathway isoprenoid biosynthesis; isopentenyl diphosphate biosynthesis via DXP pathway; isopentenyl diphosphate from 1-deoxy-D-xylulose 5-phosphate: step 3/6. Functionally, catalyzes the phosphorylation of the position 2 hydroxy group of 4-diphosphocytidyl-2C-methyl-D-erythritol. This Carboxydothermus hydrogenoformans (strain ATCC BAA-161 / DSM 6008 / Z-2901) protein is 4-diphosphocytidyl-2-C-methyl-D-erythritol kinase.